Here is a 359-residue protein sequence, read N- to C-terminus: Cytoplasmic tRNA 2-thiolation protein 1 (359 aa).

Belongs to the TtcA family. CTU1/NCS6/ATPBD3 subfamily. As to quaternary structure, interacts with NCS2 and URM1. May act by forming a heterodimer with NCS2. Component of a large molecular weight complex of more than 250 kDa.

Its subcellular location is the cytoplasm. It is found in the mitochondrion. It participates in tRNA modification; 5-methoxycarbonylmethyl-2-thiouridine-tRNA biosynthesis. Its function is as follows. Plays a central role in 2-thiolation of mcm(5)S(2)U at tRNA wobble positions of tRNA(Lys), tRNA(Glu) and tRNA(Gln). Directly binds tRNAs and probably acts by catalyzing adenylation of tRNAs, an intermediate required for 2-thiolation. It is unclear whether it acts as a sulfurtransferase that transfers sulfur from thiocarboxylated URM1 onto the uridine of tRNAs at wobble position. Prior mcm(5) tRNA modification by the elongator complex is required for 2-thiolation. May also be involved in protein urmylation. May also be involved in protein urmylation and in invasive and pseudohyphal growth. The protein is Cytoplasmic tRNA 2-thiolation protein 1 of Saccharomyces cerevisiae (strain ATCC 204508 / S288c) (Baker's yeast).